The sequence spans 470 residues: Aspartate-semialdehyde dehydrogenase 1 (470 aa).

NAD(+) contacts are provided by threonine 145 and lysine 171. Residue aspartate 243 is part of the active site. Glycine 245 provides a ligand contact to NAD(+). Residue cysteine 277 is part of the active site. Glutamate 371 is a binding site for NAD(+).

This sequence belongs to the aldehyde dehydrogenase family.

It carries out the reaction L-aspartate 4-semialdehyde + NAD(+) + H2O = L-aspartate + NADH + 2 H(+). Dehydrogenase involved in the degradation of canavanine, the delta-oxa-analog of arginine, allowing growth on canavanine as sole nitrogen and carbon source. Probably catalyzes the NAD(+)-dependent oxidation of L-aspartate-semialdehyde to L-aspartate. This is Aspartate-semialdehyde dehydrogenase 1 from Pseudomonas canavaninivorans.